The following is a 580-amino-acid chain: Mucolipin-1 (580 aa).

The interval 1–38 (MATPAGRRASETERLLTPNPGYGTQVGTSPAPTTPTEE) is disordered. Over 1–65 (MATPAGRRAS…FRAKGRKPCK (65 aa)) the chain is Cytoplasmic. Ser-10 is subject to Phosphoserine. Residues 11–16 (ETERLL) carry the Dileucine motif; mediates targeting to lysosomes motif. Residues 42 to 62 (RRRLKYFFMSPCDKFRAKGRK) form an interaction with phosphoinositides region. Residues 66–86 (LMLQVVKILVVTVQLILFGLS) form a helical membrane-spanning segment. The Extracellular segment spans residues 87 to 298 (NQLVVTFREE…VSRHGDNSFR (212 aa)). An extracellular/lumenal pore loop region spans residues 107–121 (LGYSDGSDDTFAAYT). A disulfide bridge connects residues Cys-166 and Cys-192. N-linked (GlcNAc...) asparagine glycans are attached at residues Asn-220 and Asn-230. Cys-253 and Cys-284 are disulfide-bonded. Residues 299-321 (LLFDVVVILTCSLSFLLCARSLL) traverse the membrane as a helical segment. At 322–350 (RGFLLQNEFVVFMWRRRGREISLWERLEF) the chain is on the cytoplasmic side. The helical transmembrane segment at 351 to 371 (VNGWYILLVTSDVLTISGTVM) threads the bilayer. The Extracellular segment spans residues 372–382 (KIGIEAKNLAS). Residues 383 to 405 (YDVCSILLGTSTLLVWVGVIRYL) traverse the membrane as a helical segment. Residues 406 to 427 (TFFHKYNILIATLRVALPSVMR) are Cytoplasmic-facing. The helical transmembrane segment at 428–448 (FCCCVAVIYLGYCFCGWIVLG) threads the bilayer. The Extracellular segment spans residues 449-456 (PYHVKFRS). Residues 457 to 477 (LSMVSECLFSLINGDDMFVTF) constitute an intramembrane region (pore-forming). The short motif at 469–474 (NGDDMF) is the Selectivity filter element. Residues 478–491 (AAMQAQQGHSSLVW) lie on the Extracellular side of the membrane. The chain crosses the membrane as a helical span at residues 492–513 (LFSQLYLYSFISLFIYMVLSLF). Topologically, residues 514-580 (IALITGAYDT…SPEDHSLLVN (67 aa)) are cytoplasmic. Phosphoserine is present on Ser-557. A Phosphoserine; by PAK modification is found at Ser-559. The tract at residues 565–567 (CCC) is required for palmitoylation and association with membranes. A Dileucine internalization motif; mediates AP2 complex-dependent internalization motif is present at residues 573 to 578 (EDHSLL).

Belongs to the transient receptor (TC 1.A.4) family. Polycystin subfamily. MCOLN1 sub-subfamily. Homotetramer. Homooligomer. Can heterooligomerize with MCOLN2 or MCOLN3; heteromeric assemblies have different channel properties as compared to the respective homooligomers and may be tissue-specific. Interacts with PDCD6. Interacts with TMEM163. Interacts with LAPTM4B. In terms of processing, palmitoylated; involved in association with membranes. Post-translationally, phosphorylation by PKA inhibits channel activity. Dephosphorylation increases activity. Proteolytically cleaved probably involving multiple lysosomal proteases including cathepsin B; inhibits lysosomal channel activity. As to expression, widely expressed, with the highest expression in brain, liver and kidney.

Its subcellular location is the late endosome membrane. It is found in the lysosome membrane. The protein resides in the cytoplasmic vesicle membrane. It localises to the cell projection. The protein localises to the phagocytic cup. Its subcellular location is the cytoplasmic vesicle. It is found in the phagosome membrane. The protein resides in the cell membrane. The catalysed reaction is Ca(2+)(in) = Ca(2+)(out). The enzyme catalyses Fe(2+)(in) = Fe(2+)(out). It carries out the reaction Mg(2+)(in) = Mg(2+)(out). It catalyses the reaction K(+)(in) = K(+)(out). The catalysed reaction is Na(+)(in) = Na(+)(out). Its activity is regulated as follows. Channel activity is controlled by multiple regulatory mechanisms in different subcellular compartments. Lower pH by itself has an inhibitory effect on channel conductance. Channel function is transiently modulated by changes in Ca(2+) in a pH-dependent manner; pH changes modify the aggregation state of unitary channels; a negative cooperativity between extracellular/lumenal Ca(2+) and H(+) is suggested. Fe(2+) channel activity is potentiated by low pH. Regulated by phosphoinositides in a compartment-specific manner: in lysosomes activated by PtdIns(3,5)P2 (Phosphatidylinositol 3,5-bisphosphate) and at the plasma membrane inhibited by PtdIns(4,5)P2 (Phosphatidylinositol 4,5-bisphosphate). In terms of biological role, nonselective cation channel probably playing a role in the regulation of membrane trafficking events and of metal homeostasis. Acts as a Ca(2+)-permeable cation channel with inwardly rectifying activity. Proposed to play a major role in Ca(2+) release from late endosome and lysosome vesicles to the cytoplasm, which is important for many lysosome-dependent cellular events, including the fusion and trafficking of these organelles, exocytosis and autophagy. Required for efficient uptake of large particles in macrophages in which Ca(2+) release from the lysosomes triggers lysosomal exocytosis. May also play a role in phagosome-lysosome fusion. Involved in lactosylceramide trafficking indicative for a role in the regulation of late endocytic membrane fusion/fission events. By mediating lysosomal Ca(2+) release is involved in regulation of mTORC1 signaling and in mTOR/TFEB-dependent lysosomal adaptation to environmental cues such as nutrient levels. Seems to act as lysosomal active oxygen species (ROS) sensor involved in ROS-induced TFEB activation and autophagy. Also functions as a Fe(2+) permeable channel in late endosomes and lysosomes. Also permeable to Mg(2+), Na(+). K(+) and Cs(+). Proposed to play a role in zinc homeostasis probably implicating its association with TMEM163. In adaptive immunity, TRPML2 and TRPML1 may play redundant roles in the function of the specialized lysosomes of B cells. May contribute to cellular lipase activity within the late endosomal pathway or at the cell surface which may be involved in processes of membrane reshaping and vesiculation, especially the growth of tubular structures. However, it is not known, whether it conveys the enzymatic activity directly, or merely facilitates the activity of an associated phospholipase. This Mus musculus (Mouse) protein is Mucolipin-1.